The chain runs to 61 residues: MKTVCGVFMVLLALTVLLAYLPGNTVEAGSCSNKNCVSSCQGSGNSSGKCINSKCKCYPRG.

Positions 1–19 are cleaved as a signal peptide; that stretch reads MKTVCGVFMVLLALTVLLA. 3 disulfide bridges follow: Cys31–Cys50, Cys36–Cys55, and Cys40–Cys57.

Belongs to the short scorpion toxin superfamily. Expressed by the venom gland.

It localises to the secreted. This Lychas mucronatus (Chinese swimming scorpion) protein is Putative neurotoxin-A.